A 494-amino-acid polypeptide reads, in one-letter code: Glutamyl-tRNA(Gln) amidotransferase subunit A (494 aa).

Catalysis depends on charge relay system residues lysine 72 and serine 147. The Acyl-ester intermediate role is filled by serine 171.

The protein belongs to the amidase family. GatA subfamily. In terms of assembly, heterotrimer of A, B and C subunits.

It catalyses the reaction L-glutamyl-tRNA(Gln) + L-glutamine + ATP + H2O = L-glutaminyl-tRNA(Gln) + L-glutamate + ADP + phosphate + H(+). Allows the formation of correctly charged Gln-tRNA(Gln) through the transamidation of misacylated Glu-tRNA(Gln) in organisms which lack glutaminyl-tRNA synthetase. The reaction takes place in the presence of glutamine and ATP through an activated gamma-phospho-Glu-tRNA(Gln). The polypeptide is Glutamyl-tRNA(Gln) amidotransferase subunit A (Methylacidiphilum infernorum (isolate V4) (Methylokorus infernorum (strain V4))).